A 452-amino-acid polypeptide reads, in one-letter code: Glucose-6-phosphate isomerase (452 aa).

Glu290 acts as the Proton donor in catalysis. Catalysis depends on residues His311 and Lys425.

Belongs to the GPI family.

Its subcellular location is the cytoplasm. The enzyme catalyses alpha-D-glucose 6-phosphate = beta-D-fructose 6-phosphate. Its pathway is carbohydrate biosynthesis; gluconeogenesis. It participates in carbohydrate degradation; glycolysis; D-glyceraldehyde 3-phosphate and glycerone phosphate from D-glucose: step 2/4. Functionally, catalyzes the reversible isomerization of glucose-6-phosphate to fructose-6-phosphate. In Limosilactobacillus reuteri (strain DSM 20016) (Lactobacillus reuteri), this protein is Glucose-6-phosphate isomerase.